We begin with the raw amino-acid sequence, 237 residues long: MANNEGEMQCGSMLFKQEELQEMSGVNVGGDYVEVMCGCTSHRYGDAVARLRVFPTGDLEITCECTPGCDEDKLTPAAFEKHSGRETARKWKNNVWVIIGGEKVPLSKTVLLKYYNESSKKCSRSNRSQGAKVCHRDEFVGCNDCGKERRFRLRSRDECRLHHNAMGDPNWKCSDFPYDKITCEEEEERGSRKVYRGCTRSPSCKGCTSCVCFGCELCRFSECTCQTCVDFTSNVKA.

The SAND domain maps to 18-116 (EELQEMSGVN…SKTVLLKYYN (99 aa)). A CW-type zinc finger spans residues 133–191 (VCHRDEFVGCNDCGKERRFRLRSRDECRLHHNAMGDPNWKCSDFPYDKITCEEEEERGS).

As to quaternary structure, interacts with HHO5. Associates with ATX1 for trimethylating 'Lys-4' on histone H3 (H3K4me3) at flower MADS box gene loci. As to expression, expressed at low levels in seedlings, roots, shoots, leaves, stems, inflorescences, pollen, flowers and siliques, with highest levels dividing tissues including inflorescence.

It localises to the cytoplasm. The protein localises to the nucleus. Putative transcription factor that acts as a key negative regulator of cell accumulation in shoot and floral meristems. Negatively regulates the size of the WUSCHEL (WUS)-expressing organizing center in inflorescence meristems. May act by down-regulating expression of WUS. Acts as an antirepressor that counteracts EMF1 action through modulation of trimethylated 'Lys-4' on histone H3 (H3K4me3) marks on target gene loci (including genes involved in salt stress response and flower development). Collaboratively with RBL and CYP40/SQN, influences floral meristem (FM) determinacy in an AGAMOUS and SUPERMAN-dependent manner, thus contributing to the floral developmental homeostasis. This is Protein ULTRAPETALA 1 from Arabidopsis thaliana (Mouse-ear cress).